Here is a 282-residue protein sequence, read N- to C-terminus: PILR alpha-associated neural protein (282 aa).

The N-terminal stretch at 1–31 (MESRMWPALLLSHLLPLWPLLLLPLPPPAQG) is a signal peptide. A disordered region spans residues 28–99 (PAQGSSSSPR…PSGFEEGPPS (72 aa)). Over 32–178 (SSSSPRTPPA…FGGRGEGVDP (147 aa)) the chain is Extracellular. Residues 46-56 (PCARGGPSAPR) are compositionally biased toward low complexity. O-linked (GalNAc...) threonine glycosylation is present at Thr140. A helical membrane pass occupies residues 179-199 (QLYVTITISIIIVLVATGIIF). Topologically, residues 200 to 282 (KFCWDRSQKR…QLNRIPLVNL (83 aa)) are cytoplasmic. Positions 209 to 282 (RRRPSGQQGA…QLNRIPLVNL (74 aa)) are disordered. A compositionally biased stretch (polar residues) spans 213–229 (SGQQGALRQEESQQPLT).

O-glycosylation at Thr-140 is essential for recognition by PILRA. As to expression, mainly expressed in adult brain and cerebellum. Weaker expression in fetal brain and virtually no expression in spleen, heart, kidney, liver and dorsal ganglion relative to brain.

Its subcellular location is the membrane. Acts as a ligand for PILRA in neural tissues, where it may be involved in immune regulation. This chain is PILR alpha-associated neural protein (PIANP), found in Homo sapiens (Human).